The sequence spans 426 residues: Putative competence-damage inducible protein (426 aa).

It belongs to the CinA family.

This is Putative competence-damage inducible protein from Symbiobacterium thermophilum (strain DSM 24528 / JCM 14929 / IAM 14863 / T).